The following is a 282-amino-acid chain: HTH-type transcriptional activator RhaR (282 aa).

Residues 179-277 (DKLITALANS…GMTPSQWRHL (99 aa)) enclose the HTH araC/xylS-type domain. 2 consecutive DNA-binding regions (H-T-H motif) follow at residues 196–217 (DAFCQQEQCSERVLRQQFRAQT) and 244–267 (ISEISMQCGFEDSNYFSVVFTRET).

Binds DNA as a dimer.

It localises to the cytoplasm. In terms of biological role, activates expression of the rhaSR operon in response to L-rhamnose. In Salmonella typhimurium (strain LT2 / SGSC1412 / ATCC 700720), this protein is HTH-type transcriptional activator RhaR.